Reading from the N-terminus, the 1106-residue chain is MAEYWQQLTNGAGEAGPGNESSAMADCNGGHESAAVGGSCNRHSNNNYVNFNQFIMQHNLGGGAPSNATSTMQHPVGSSYTNFSLGGGGGAFGLNPPVASASTSHFANVSHQSPNFYSQAMIPTYQNGDGIARVTVTSSYGSVNPSNSNFSSFYTPFGNNPFDFSASKLQASAPEFVPNFAKLSLEETPAAATTNGNSTASLETAINETRPRTLRAQEPAERGANNQCSNHNYERERERERDRDRDRERDRDRDRDRDRDRDRDRDRDSRPGNTRQQRRSDYRDDREDRYERSDRRRPQKQQRYDNHRSNKRRDDWNRNRDRINGFPRAVDDLDTSNESAHPSPEKQSQLQQISPRRGPPLPPADNEKLSQREKLVRDIEQRRLECLVCVEAIKSHQPTWSCRNCYHMLHLKCTITWASSSKSEVGWRCPACQNVLQDLPRDYLCFCGKLKNPPVSRTELAHSCGEVCCRIEGCSHACTLLCHPGPCPPCQANVVRSCGCGRSTKTMQCAMKEEVLCGEICDKLLNCGEHRCQAECHSGKCAACSEQVVQQCHCGKQERKVPCTRESQDKRTYSCKDSCGQPLPCGHHKCKDSCHAGSCRPCKLSPEQITSCPCGKMPVPAGQRSSCLDPIPTCEGICSRTLRCGKPAHPHQCGSKCHLGQCPPCPKQTGVKCRCGHMDQMIKCRQLCNRADDARCKRRCTKKRSCGKHKCNVECCIDIDHDCPLPCNRTLSCGKHKCDQPCHRGNCPPCYRSSFEELYCECGAEVIYPPVPCGTKKPICKLPCSRIHPCDHPPQHNCHSGPTCPPCMIFTTKLCHGNHELRKTIPCSQPNFSCGMACGKPLPCGGHKCIKPCHEGPCQSAGEICRQSCTKPRPTCGHKCAAACHEGACPETPCKELVEVQCECGNRKQNRSCQELAREHSRIATIQLASSMAEMSRGNYMELSEILAPAKKSNKTLDCNDECRLLERNRRLAAALSSGNSDTKQKCLTKYSEFVRGFAKKNPALTKSVYETLTDLVKLAKESKQRSRSHSFPTMNREKRQLVHELCEVFGIESVSYDKEPNRNVVATAHKDRCWFPATSIMEVLARESGQRRVPVPSNNAWGLKK.

2 disordered regions span residues 7–26 (QLTN…AMAD) and 189–371 (PAAA…KLSQ). The segment covering 189 to 201 (PAAATTNGNSTAS) has biased composition (low complexity). Basic and acidic residues-rich tracts occupy residues 232-270 (NYER…RDSR) and 278-323 (RRSD…RDRI). Thr335 bears the Phosphothreonine mark. A phosphoserine mark is found at Ser336, Ser339, Ser343, and Ser354. Residues 336–354 (SNESAHPSPEKQSQLQQIS) are compositionally biased toward polar residues. An RING-type; atypical zinc finger spans residues 386-433 (CLVCVEAIKSHQPTWSCRNCYHMLHLKCTITWASSSKSEVGWRCPACQ). 8 consecutive NF-X1-type zinc fingers follow at residues 474–492 (CSHA…PCQA), 527–546 (CGEH…ACSE), 585–604 (CGHH…PCKL), 644–667 (CGKP…PCPK), 706–725 (CGKH…DCPL), 733–752 (CGKH…PCYR), 844–867 (CGGH…ICRQ), and 876–896 (CGHK…PCKE). The R3H domain maps to 1006 to 1071 (TKSVYETLTD…NRNVVATAHK (66 aa)).

The protein belongs to the NFX1 family. In terms of tissue distribution, ovaries and embryonic central nervous system.

The protein resides in the nucleus. Plays an essential role during the late stages of embryonic neurogenesis. May either fine-tune the guidance or the spatial maintenance of the migrating SNB and in nerve roots, which are composed of axons originating from distinct groups of motor neurons and may be required to either guide or maintain the position of these nerves along a direct and straight path to their ultimate targets in particular muscle fields. May play a role in egg chamber development and/or may confer essential maternal contributions to the early embryo. This chain is Protein shuttle craft (stc), found in Drosophila melanogaster (Fruit fly).